The chain runs to 122 residues: Large ribosomal subunit protein uL14 (122 aa).

It belongs to the universal ribosomal protein uL14 family. In terms of assembly, part of the 50S ribosomal subunit. Forms a cluster with proteins L3 and L19. In the 70S ribosome, L14 and L19 interact and together make contacts with the 16S rRNA in bridges B5 and B8.

In terms of biological role, binds to 23S rRNA. Forms part of two intersubunit bridges in the 70S ribosome. The polypeptide is Large ribosomal subunit protein uL14 (Mycoplasma mobile (strain ATCC 43663 / 163K / NCTC 11711) (Mesomycoplasma mobile)).